A 510-amino-acid chain; its full sequence is Chromosomal replication initiator protein DnaA (510 aa).

The domain I, interacts with DnaA modulators stretch occupies residues 1–107; it reads MTNDPGSGFA…VRIAPPPADD (107 aa). The interval 107–169 is domain II; sequence DDDDSVAAAV…ADTSASADGT (63 aa). Residues 119–168 form a disordered region; that stretch reads PGLEASPETSQEVSDEIDDFGENAPKSRQSWPTHFKKRSTDADTSASADG. The tract at residues 170–386 is domain III, AAA+ region; sequence SLNRRYTFDT…GALIRVTAFA (217 aa). The ATP site is built by Gly-214, Gly-216, Lys-217, and Thr-218. The tract at residues 387 to 510 is domain IV, binds dsDNA; that stretch reads SLNKTPIDKA…TTRIRQRSKR (124 aa).

This sequence belongs to the DnaA family. As to quaternary structure, oligomerizes as a right-handed, spiral filament on DNA at oriC.

It localises to the cytoplasm. Its function is as follows. Plays an essential role in the initiation and regulation of chromosomal replication. ATP-DnaA binds to the origin of replication (oriC) to initiate formation of the DNA replication initiation complex once per cell cycle. Binds the DnaA box (a 9 base pair repeat at the origin) and separates the double-stranded (ds)DNA. Forms a right-handed helical filament on oriC DNA; dsDNA binds to the exterior of the filament while single-stranded (ss)DNA is stabiized in the filament's interior. The ATP-DnaA-oriC complex binds and stabilizes one strand of the AT-rich DNA unwinding element (DUE), permitting loading of DNA polymerase. After initiation quickly degrades to an ADP-DnaA complex that is not apt for DNA replication. Binds acidic phospholipids. This chain is Chromosomal replication initiator protein DnaA, found in Mycobacterium ulcerans (strain Agy99).